Consider the following 91-residue polypeptide: Small ribosomal subunit protein uS15c (91 aa).

It belongs to the universal ribosomal protein uS15 family. As to quaternary structure, part of the 30S ribosomal subunit.

The protein localises to the plastid. It localises to the chloroplast. The polypeptide is Small ribosomal subunit protein uS15c (rps15) (Adiantum capillus-veneris (Maidenhair fern)).